A 142-amino-acid polypeptide reads, in one-letter code: uncharacterized protein (142 aa).

Residues 1–138 enclose the N-acetyltransferase domain; it reads MLEKLAEAHP…SFMILVKPLA (138 aa).

This is an uncharacterized protein from Bacillus subtilis (strain 168).